The sequence spans 872 residues: Alanine--tRNA ligase (872 aa).

Zn(2+) is bound by residues H566, H570, C668, and H672.

This sequence belongs to the class-II aminoacyl-tRNA synthetase family. The cofactor is Zn(2+).

It localises to the cytoplasm. It catalyses the reaction tRNA(Ala) + L-alanine + ATP = L-alanyl-tRNA(Ala) + AMP + diphosphate. Catalyzes the attachment of alanine to tRNA(Ala) in a two-step reaction: alanine is first activated by ATP to form Ala-AMP and then transferred to the acceptor end of tRNA(Ala). Also edits incorrectly charged Ser-tRNA(Ala) and Gly-tRNA(Ala) via its editing domain. This is Alanine--tRNA ligase from Lactococcus lactis subsp. lactis (strain IL1403) (Streptococcus lactis).